The following is an 863-amino-acid chain: Leucine-rich repeat and death domain-containing protein 1 (863 aa).

Disordered stretches follow at residues Met-1 to Ser-37 and Ser-51 to Leu-100. Positions Ser-88 to Leu-100 are enriched in low complexity. LRR repeat units follow at residues Cys-143 to Ile-166, Lys-167 to Asp-189, Leu-190 to Leu-213, His-214 to Leu-236, Asn-238 to Leu-259, Gly-260 to Leu-282, Tyr-284 to Leu-305, Pro-306 to Leu-328, Lys-329 to Leu-351, Lys-353 to Phe-374, Arg-375 to Cys-397, Ala-398 to Leu-420, Asn-422 to Leu-443, Asn-445 to Cys-466, Lys-468 to Leu-489, Asp-490 to Lys-513, Leu-515 to Leu-535, Ile-536 to Met-558, Ser-560 to Leu-581, Glu-582 to Leu-604, Arg-606 to Leu-627, Leu-630 to Met-653, Thr-654 to Leu-676, Asn-678 to Leu-699, Asn-700 to Leu-722, and Ser-724 to Gly-745. Residues Glu-767–Asn-855 form the Death domain. The LRR 27 repeat unit spans residues Leu-856–Phe-863.

The polypeptide is Leucine-rich repeat and death domain-containing protein 1 (LRRD1) (Macaca fascicularis (Crab-eating macaque)).